Here is a 492-residue protein sequence, read N- to C-terminus: Bifunctional purine biosynthesis protein PurH (492 aa).

The 144-residue stretch at Met1–Val144 folds into the MGS-like domain.

It belongs to the PurH family.

It catalyses the reaction (6R)-10-formyltetrahydrofolate + 5-amino-1-(5-phospho-beta-D-ribosyl)imidazole-4-carboxamide = 5-formamido-1-(5-phospho-D-ribosyl)imidazole-4-carboxamide + (6S)-5,6,7,8-tetrahydrofolate. The enzyme catalyses IMP + H2O = 5-formamido-1-(5-phospho-D-ribosyl)imidazole-4-carboxamide. The protein operates within purine metabolism; IMP biosynthesis via de novo pathway; 5-formamido-1-(5-phospho-D-ribosyl)imidazole-4-carboxamide from 5-amino-1-(5-phospho-D-ribosyl)imidazole-4-carboxamide (10-formyl THF route): step 1/1. Its pathway is purine metabolism; IMP biosynthesis via de novo pathway; IMP from 5-formamido-1-(5-phospho-D-ribosyl)imidazole-4-carboxamide: step 1/1. In Staphylococcus saprophyticus subsp. saprophyticus (strain ATCC 15305 / DSM 20229 / NCIMB 8711 / NCTC 7292 / S-41), this protein is Bifunctional purine biosynthesis protein PurH.